Reading from the N-terminus, the 393-residue chain is S-adenosylmethionine synthase (393 aa).

His16 serves as a coordination point for ATP. Asp18 contacts Mg(2+). Glu44 contributes to the K(+) binding site. The L-methionine site is built by Glu57 and Gln100. A flexible loop region spans residues 100–110; that stretch reads QSNDIAQGVDH. ATP-binding positions include 167–169, 238–239, Asp247, 253–254, Ala270, and Lys274; these read DAK, RF, and RK. Position 247 (Asp247) interacts with L-methionine. L-methionine is bound at residue Lys278.

The protein belongs to the AdoMet synthase family. As to quaternary structure, homotetramer; dimer of dimers. Requires Mg(2+) as cofactor. The cofactor is K(+).

Its subcellular location is the cytoplasm. The enzyme catalyses L-methionine + ATP + H2O = S-adenosyl-L-methionine + phosphate + diphosphate. The protein operates within amino-acid biosynthesis; S-adenosyl-L-methionine biosynthesis; S-adenosyl-L-methionine from L-methionine: step 1/1. Functionally, catalyzes the formation of S-adenosylmethionine (AdoMet) from methionine and ATP. The overall synthetic reaction is composed of two sequential steps, AdoMet formation and the subsequent tripolyphosphate hydrolysis which occurs prior to release of AdoMet from the enzyme. The sequence is that of S-adenosylmethionine synthase from Polaromonas sp. (strain JS666 / ATCC BAA-500).